A 478-amino-acid chain; its full sequence is Deoxyribodipyrimidine photo-lyase (478 aa).

The region spanning 2 to 136 (NVNLMWFRND…IINCFHDSVL (135 aa)) is the Photolyase/cryptochrome alpha/beta domain. E110 contacts (6R)-5,10-methylene-5,6,7,8-tetrahydrofolate. Residues Y227 and 239–243 (TSMLS) contribute to the FAD site. Interaction with DNA regions lie at residues 279 to 286 (ELLWREFY) and 346 to 347 (NR). 377-379 (DGD) provides a ligand contact to FAD. Residue Q409 participates in DNA binding.

It belongs to the DNA photolyase class-1 family. Monomer. The cofactor is FAD. (6R)-5,10-methylene-5,6,7,8-tetrahydrofolate serves as cofactor.

The enzyme catalyses cyclobutadipyrimidine (in DNA) = 2 pyrimidine residues (in DNA).. Functionally, involved in repair of UV radiation-induced DNA damage. Catalyzes the light-dependent monomerization (300-600 nm) of cyclobutyl pyrimidine dimers (in cis-syn configuration), which are formed between adjacent bases on the same DNA strand upon exposure to ultraviolet radiation. The sequence is that of Deoxyribodipyrimidine photo-lyase (phrB) from Buchnera aphidicola subsp. Baizongia pistaciae (strain Bp).